Consider the following 278-residue polypeptide: Biotin synthase (278 aa).

The Radical SAM core domain occupies 1-227 (MQIMLCAISN…QSVVMVAGGR (227 aa)). Residues cysteine 16, cysteine 20, and cysteine 23 each coordinate [4Fe-4S] cluster. [2Fe-2S] cluster contacts are provided by cysteine 60, cysteine 95, and cysteine 153.

This sequence belongs to the radical SAM superfamily. Biotin synthase family. In terms of assembly, homodimer. The cofactor is [4Fe-4S] cluster. It depends on [2Fe-2S] cluster as a cofactor.

The catalysed reaction is (4R,5S)-dethiobiotin + (sulfur carrier)-SH + 2 reduced [2Fe-2S]-[ferredoxin] + 2 S-adenosyl-L-methionine = (sulfur carrier)-H + biotin + 2 5'-deoxyadenosine + 2 L-methionine + 2 oxidized [2Fe-2S]-[ferredoxin]. The protein operates within cofactor biosynthesis; biotin biosynthesis; biotin from 7,8-diaminononanoate: step 2/2. In terms of biological role, catalyzes the conversion of dethiobiotin (DTB) to biotin by the insertion of a sulfur atom into dethiobiotin via a radical-based mechanism. The protein is Biotin synthase of Campylobacter jejuni subsp. jejuni serotype O:23/36 (strain 81-176).